A 229-amino-acid chain; its full sequence is GTP cyclohydrolase 1 (229 aa).

A disordered region spans residues 1 to 21; that stretch reads MTLAKPGSGSQSRMDDKAHFK. Cys116, His119, and Cys187 together coordinate Zn(2+).

The protein belongs to the GTP cyclohydrolase I family. Toroid-shaped homodecamer, composed of two pentamers of five dimers.

The enzyme catalyses GTP + H2O = 7,8-dihydroneopterin 3'-triphosphate + formate + H(+). It functions in the pathway cofactor biosynthesis; 7,8-dihydroneopterin triphosphate biosynthesis; 7,8-dihydroneopterin triphosphate from GTP: step 1/1. The polypeptide is GTP cyclohydrolase 1 (Synechococcus sp. (strain JA-2-3B'a(2-13)) (Cyanobacteria bacterium Yellowstone B-Prime)).